A 118-amino-acid chain; its full sequence is MICOS complex subunit MIC13 (118 aa).

Residues 1 to 7 are Mitochondrial matrix-facing; sequence MVARVWS. The chain crosses the membrane as a helical span at residues 8–26; the sequence is LMRFLIKGSVAGGAVYLVY. The Mitochondrial intermembrane segment spans residues 27-118; the sequence is DQELLGPSDK…GWEYVKARTK (92 aa).

This sequence belongs to the MICOS complex subunit Mic13 family. In terms of assembly, component of the mitochondrial contact site and cristae organizing system (MICOS) complex, composed of at least MICOS10/MIC10, CHCHD3/MIC19, CHCHD6/MIC25, APOO/MIC26, MICOS13/MIC13, APOOL/MIC27 and IMMT/MIC60. The complex associates with mitochondrial outer membrane proteins SAMM50, MTX1 and MTX2, and with HSPA9.

It is found in the mitochondrion inner membrane. Functionally, component of the MICOS complex, a large protein complex of the mitochondrial inner membrane that plays crucial roles in the maintenance of crista junctions, inner membrane architecture, and formation of contact sites to the outer membrane. Constituent of mature MICOS complex, it is required for the formation of cristae junction (CJ) and maintenance of cristae morphology. Required for the incorporation of MICOS10/MIC10 into the MICOS complex. In Macaca fascicularis (Crab-eating macaque), this protein is MICOS complex subunit MIC13.